Reading from the N-terminus, the 529-residue chain is MSTVAIVDFGSQVTQLIARRVRELGVYSEVFPPSTDFQAMASRGIKIDAFILSGGPNSVQQLHGVPNAVSDVLNLNLQKGVPVLGICYGFQMLAHYFGADVAQSVAREFGRAWLDVIEPSSITEGVWSLGSKVDVWMSHSDSIVGEVPQGFRVVARSADTGAVAFMCNDERKIYGVQFHPEVAHTPGGREMLDNFLKIAGCTRDWTMGSFLHTQIGAIKSATDGGRVVAAISGGVDSSVASVLVHKAIGERLVCVFVDTGLLRKGEAGVVRDLFVGKLNMHVNVLDKSALFMQRLAGVQDPEVKRKIIGETFIEVFEQEAKSLGDIKFLMQGTIYPDVIESGVGESGTKIKSHHNVGGLPEIMNLSLVEPLRHLFKDEVRLLGKELGLPSAILDRHPFPGPGLAVRIMGEVTAERVELLREIDNIYIDMMRDSGLYDHIWQAFAVLVPVRTVGVMGDGRTYGYVCALRAVTSSDGMTADCFPFGETDERKLEFLAFLQKVSRAIVSNLQGVNRVVYDMTSKPPATIEWE.

The Glutamine amidotransferase type-1 domain maps to Thr-3–Asp-204. Residue Cys-87 is the Nucleophile of the active site. Residues His-179 and Glu-181 contribute to the active site. The 191-residue stretch at Trp-205–Arg-395 folds into the GMPS ATP-PPase domain. Ser-232–Ser-238 contributes to the ATP binding site.

Homodimer.

The catalysed reaction is XMP + L-glutamine + ATP + H2O = GMP + L-glutamate + AMP + diphosphate + 2 H(+). The protein operates within purine metabolism; GMP biosynthesis; GMP from XMP (L-Gln route): step 1/1. Its function is as follows. Catalyzes the synthesis of GMP from XMP. In Anaplasma marginale (strain St. Maries), this protein is GMP synthase [glutamine-hydrolyzing].